The sequence spans 286 residues: Release factor glutamine methyltransferase (286 aa).

S-adenosyl-L-methionine contacts are provided by residues 120–124, Asp143, Trp172, and Asn187; that span reads GTGSG. A substrate-binding site is contributed by 187 to 190; sequence NPPY.

The protein belongs to the protein N5-glutamine methyltransferase family. PrmC subfamily.

The catalysed reaction is L-glutaminyl-[peptide chain release factor] + S-adenosyl-L-methionine = N(5)-methyl-L-glutaminyl-[peptide chain release factor] + S-adenosyl-L-homocysteine + H(+). Functionally, methylates the class 1 translation termination release factors RF1/PrfA and RF2/PrfB on the glutamine residue of the universally conserved GGQ motif. This is Release factor glutamine methyltransferase from Gloeobacter violaceus (strain ATCC 29082 / PCC 7421).